A 351-amino-acid polypeptide reads, in one-letter code: Putative ABC transporter permease protein MJ0876 (351 aa).

9 helical membrane-spanning segments follow: residues 4-24 (VGILLILFILSLILPFTALYL), 59-79 (LPPIIGAVLIGLTISVAGLML), 99-119 (VLMVVALVIFIDSLSHLFEIF), 124-144 (ILVAGWCGGIFSMILLIIIAL), 152-172 (VIIVALLLSYFFMGLRAYLIA), 196-216 (GDVIPMTICSIIFIIGVMFLI), 249-269 (FITGAIIPYVGLIAFIGIIAP), 284-304 (LVPATMFLGVILMVSCHILSL), and 322-342 (PLPIGAVLDILGGMLVVYLVY).

This sequence belongs to the binding-protein-dependent transport system permease family. FecCD subfamily.

Its subcellular location is the cell membrane. Functionally, probably part of a binding-protein-dependent transport system. Probably responsible for the translocation of the substrate across the membrane. The chain is Putative ABC transporter permease protein MJ0876 from Methanocaldococcus jannaschii (strain ATCC 43067 / DSM 2661 / JAL-1 / JCM 10045 / NBRC 100440) (Methanococcus jannaschii).